A 207-amino-acid polypeptide reads, in one-letter code: Pyrrolidone-carboxylate peptidase (207 aa).

Active-site residues include Glu-80, Cys-143, and His-167.

The protein belongs to the peptidase C15 family. Homotetramer.

The protein localises to the cytoplasm. The catalysed reaction is Release of an N-terminal pyroglutamyl group from a polypeptide, the second amino acid generally not being Pro.. Removes 5-oxoproline from various penultimate amino acid residues except L-proline. The chain is Pyrrolidone-carboxylate peptidase from Coprothermobacter proteolyticus (strain ATCC 35245 / DSM 5265 / OCM 4 / BT).